The primary structure comprises 265 residues: 1-(5-phosphoribosyl)-5-[(5-phosphoribosylamino)methylideneamino] imidazole-4-carboxamide isomerase (265 aa).

Aspartate 8 serves as the catalytic Proton acceptor. Aspartate 139 functions as the Proton donor in the catalytic mechanism.

This sequence belongs to the HisA/HisF family.

The protein resides in the cytoplasm. The catalysed reaction is 1-(5-phospho-beta-D-ribosyl)-5-[(5-phospho-beta-D-ribosylamino)methylideneamino]imidazole-4-carboxamide = 5-[(5-phospho-1-deoxy-D-ribulos-1-ylimino)methylamino]-1-(5-phospho-beta-D-ribosyl)imidazole-4-carboxamide. It participates in amino-acid biosynthesis; L-histidine biosynthesis; L-histidine from 5-phospho-alpha-D-ribose 1-diphosphate: step 4/9. In Herminiimonas arsenicoxydans, this protein is 1-(5-phosphoribosyl)-5-[(5-phosphoribosylamino)methylideneamino] imidazole-4-carboxamide isomerase.